The following is a 177-amino-acid chain: Translation initiation factor IF-3 (177 aa).

This sequence belongs to the IF-3 family. Monomer.

It is found in the cytoplasm. IF-3 binds to the 30S ribosomal subunit and shifts the equilibrium between 70S ribosomes and their 50S and 30S subunits in favor of the free subunits, thus enhancing the availability of 30S subunits on which protein synthesis initiation begins. In Clostridium perfringens (strain 13 / Type A), this protein is Translation initiation factor IF-3.